The sequence spans 402 residues: Indole-3-glycerol phosphate synthase, chloroplastic (402 aa).

The N-terminal 65 residues, methionine 1–serine 65, are a transit peptide targeting the chloroplast.

The protein belongs to the TrpC family. In terms of tissue distribution, expressed in leaves.

It localises to the plastid. It is found in the chloroplast. The enzyme catalyses 1-(2-carboxyphenylamino)-1-deoxy-D-ribulose 5-phosphate + H(+) = (1S,2R)-1-C-(indol-3-yl)glycerol 3-phosphate + CO2 + H2O. The protein operates within amino-acid biosynthesis; L-tryptophan biosynthesis; L-tryptophan from chorismate: step 4/5. Its function is as follows. Indole-3-glycerol phosphate synthase required for tryptophan biosynthesis. This Arabidopsis thaliana (Mouse-ear cress) protein is Indole-3-glycerol phosphate synthase, chloroplastic.